Reading from the N-terminus, the 198-residue chain is Large ribosomal subunit protein bL25 (198 aa).

Belongs to the bacterial ribosomal protein bL25 family. CTC subfamily. Part of the 50S ribosomal subunit; part of the 5S rRNA/L5/L18/L25 subcomplex. Contacts the 5S rRNA. Binds to the 5S rRNA independently of L5 and L18.

Functionally, this is one of the proteins that binds to the 5S RNA in the ribosome where it forms part of the central protuberance. This Bordetella avium (strain 197N) protein is Large ribosomal subunit protein bL25.